The sequence spans 299 residues: Acidic endochitinase Pun g 14, amyloplastic (299 aa).

An amyloplast-targeting transit peptide spans 1–26 (MAKTLPFSRALLLSLSILLVARAISA). The 273-residue stretch at 27–299 (GDIAIYWGQN…TYSTTIKDQV (273 aa)) folds into the GH18 domain. Cystine bridges form between Cys46/Cys93 and Cys76/Cys83. The Proton donor role is filled by Glu153. Cysteines 185 and 216 form a disulfide.

The protein belongs to the glycosyl hydrolase 18 family. Chitinase class III subfamily. Monomer. In terms of tissue distribution, highly expressed in seeds and to a lesser extent in the skin of the pomegranate fruit (at protein level). Not expressed in leaves or flesh of the fruit (at protein level).

It localises to the plastid. It is found in the amyloplast. The enzyme catalyses Random endo-hydrolysis of N-acetyl-beta-D-glucosaminide (1-&gt;4)-beta-linkages in chitin and chitodextrins.. With respect to regulation, activity is not affected by addition of 10 mM Ca(2+) or removal of Ca(2+). Functionally, hydrolyzes chitin. Probable calcium storage protein of the seeds. Binds calcium ions with high capacity and low affinity. Involved in seed germination. The polypeptide is Acidic endochitinase Pun g 14, amyloplastic (Punica granatum (Pomegranate)).